Here is a 277-residue protein sequence, read N- to C-terminus: Methylglyoxal reductase DkgA (277 aa).

Tyr-51 serves as the catalytic Proton donor. His-107 contributes to the substrate binding site. An NADP(+)-binding site is contributed by 187 to 241 (SPLAQGGKGVFDQEIIRKLAQQYNKTPAQIVIRWHLDSGLIVIPKSVTPARIREN).

Belongs to the aldo/keto reductase family. In terms of assembly, monomer.

Its subcellular location is the cytoplasm. It catalyses the reaction hydroxyacetone + NADP(+) = methylglyoxal + NADPH + H(+). Its function is as follows. Aldo-keto reductase that significantly contributes to cellular methylglyoxal detoxification by catalyzing the NADPH-dependent conversion of methylglyoxal to acetol. The sequence is that of Methylglyoxal reductase DkgA from Yersinia pestis.